We begin with the raw amino-acid sequence, 272 residues long: Shikimate dehydrogenase (NADP(+)) (272 aa).

Residues 14–16 (SKS) and Thr-61 each bind shikimate. Lys-65 (proton acceptor) is an active-site residue. An NADP(+)-binding site is contributed by Glu-77. 2 residues coordinate shikimate: Asn-86 and Asp-102. NADP(+)-binding positions include 126–130 (GAGGA), 149–154 (NRTADK), and Met-212. Shikimate is bound at residue Tyr-214. Gly-237 lines the NADP(+) pocket.

Belongs to the shikimate dehydrogenase family. As to quaternary structure, homodimer.

It carries out the reaction shikimate + NADP(+) = 3-dehydroshikimate + NADPH + H(+). It participates in metabolic intermediate biosynthesis; chorismate biosynthesis; chorismate from D-erythrose 4-phosphate and phosphoenolpyruvate: step 4/7. Involved in the biosynthesis of the chorismate, which leads to the biosynthesis of aromatic amino acids. Catalyzes the reversible NADPH linked reduction of 3-dehydroshikimate (DHSA) to yield shikimate (SA). This chain is Shikimate dehydrogenase (NADP(+)), found in Glaesserella parasuis serovar 5 (strain SH0165) (Haemophilus parasuis).